The following is a 268-amino-acid chain: UPF0328 protein ECU10_1850 (268 aa).

This sequence belongs to the UPF0328 family.

This is UPF0328 protein ECU10_1850 from Encephalitozoon cuniculi (strain GB-M1) (Microsporidian parasite).